An 850-amino-acid chain; its full sequence is AdoMet-dependent rRNA methyltransferase SPB1 (850 aa).

Residues Gly58, Trp60, Asp78, Asp94, and Asp119 each contribute to the S-adenosyl-L-methionine site. The active-site Proton acceptor is Lys159. Positions 273-282 are enriched in polar residues; the sequence is GETNEMTWTP. Disordered regions lie at residues 273–305, 388–414, 529–569, and 620–646; these read GETNEMTWTPRSIKEGEVDEEEEKEKDKEARDE, IDKELSELGEREKARKKRERRRRNEMK, GISD…RTLN, and AKKNGLEYSDSEDEEDDIVMETQKQDD. Residues 388–400 show a composition bias toward basic and acidic residues; it reads IDKELSELGEREK. The stretch at 397–425 forms a coiled coil; the sequence is EREKARKKRERRRRNEMKQREIQRMQMNM. A compositionally biased stretch (basic residues) spans 401 to 411; the sequence is ARKKRERRRRN. 2 stretches are compositionally biased toward acidic residues: residues 537–561 and 628–638; these read DESDGEMSADDVDMATIDDGEDEDD and SDSEDEEDDIV. A coiled-coil region spans residues 746 to 773; the sequence is LEAKGRKKMRALRRLEQMKKKSELINED. The segment at 811-850 is disordered; that stretch reads KNKGIAGRPRGVTGKYKMVDGTMKKEQRAIRRIKKKMGKK. The segment covering 840–850 has biased composition (basic residues); it reads IRRIKKKMGKK.

The protein belongs to the class I-like SAM-binding methyltransferase superfamily. RNA methyltransferase RlmE family. SPB1 subfamily. In terms of assembly, component of the nucleolar and nucleoplasmic pre-60S ribosomal particle.

It is found in the nucleus. The protein resides in the nucleolus. The catalysed reaction is a ribonucleotide in rRNA + S-adenosyl-L-methionine = a 2'-O-methylribonucleotide in rRNA + S-adenosyl-L-homocysteine + H(+). Its function is as follows. Required for proper assembly of pre-ribosomal particles during the biogenesis of the 60S ribosomal subunit. The chain is AdoMet-dependent rRNA methyltransferase SPB1 from Yarrowia lipolytica (strain CLIB 122 / E 150) (Yeast).